The chain runs to 542 residues: Chaperonin GroEL 1 (542 aa).

ATP is bound by residues 29-32, 86-90, Gly-414, 479-481, and Asp-495; these read TIGP, DGTTT, and DAL.

This sequence belongs to the chaperonin (HSP60) family. In terms of assembly, forms a cylinder of 14 subunits composed of two heptameric rings stacked back-to-back. Interacts with the co-chaperonin GroES.

The protein resides in the cytoplasm. It carries out the reaction ATP + H2O + a folded polypeptide = ADP + phosphate + an unfolded polypeptide.. Functionally, together with its co-chaperonin GroES, plays an essential role in assisting protein folding. The GroEL-GroES system forms a nano-cage that allows encapsulation of the non-native substrate proteins and provides a physical environment optimized to promote and accelerate protein folding. This chain is Chaperonin GroEL 1, found in Synechococcus sp. (strain JA-3-3Ab) (Cyanobacteria bacterium Yellowstone A-Prime).